Here is a 279-residue protein sequence, read N- to C-terminus: Large ribosomal subunit protein uL2 (279 aa).

The interval 223-279 (PVAMNPVDHPMGGGEGRASGGHPRSRKGLPAKGFKTRSRTKASNKYIVERRKTRKKK) is disordered. Positions 245-264 (PRSRKGLPAKGFKTRSRTKA) are enriched in basic residues.

Belongs to the universal ribosomal protein uL2 family. In terms of assembly, part of the 50S ribosomal subunit. Forms a bridge to the 30S subunit in the 70S ribosome.

Its function is as follows. One of the primary rRNA binding proteins. Required for association of the 30S and 50S subunits to form the 70S ribosome, for tRNA binding and peptide bond formation. It has been suggested to have peptidyltransferase activity; this is somewhat controversial. Makes several contacts with the 16S rRNA in the 70S ribosome. The protein is Large ribosomal subunit protein uL2 of Christiangramia forsetii (strain DSM 17595 / CGMCC 1.15422 / KT0803) (Gramella forsetii).